A 354-amino-acid polypeptide reads, in one-letter code: Probable butyrate kinase (354 aa).

Belongs to the acetokinase family.

The protein localises to the cytoplasm. It carries out the reaction butanoate + ATP = butanoyl phosphate + ADP. This is Probable butyrate kinase from Phocaeicola vulgatus (strain ATCC 8482 / DSM 1447 / JCM 5826 / CCUG 4940 / NBRC 14291 / NCTC 11154) (Bacteroides vulgatus).